We begin with the raw amino-acid sequence, 943 residues long: Protein translocase subunit SecA (943 aa).

ATP-binding positions include Q90, 108–112 (GEGKT), and D509. Residues 535–560 (PNNEHKPPIPKQRSSKSKGGFSSKVG) form a disordered region. Over residues 551–560 (SKGGFSSKVG) the composition is skewed to low complexity.

The protein belongs to the SecA family. In terms of assembly, monomer and homodimer. Part of the essential Sec protein translocation apparatus which comprises SecA, SecYEG and auxiliary proteins SecDF. Other proteins may also be involved.

The protein localises to the cell inner membrane. It localises to the cellular thylakoid membrane. It is found in the cytoplasm. It catalyses the reaction ATP + H2O + cellular proteinSide 1 = ADP + phosphate + cellular proteinSide 2.. In terms of biological role, part of the Sec protein translocase complex. Interacts with the SecYEG preprotein conducting channel. Has a central role in coupling the hydrolysis of ATP to the transfer of proteins into and across the cell membrane, serving as an ATP-driven molecular motor driving the stepwise translocation of polypeptide chains across the membrane. Probably participates in protein translocation into and across both the cytoplasmic and thylakoid membranes in cyanobacterial cells. The protein is Protein translocase subunit SecA of Prochlorococcus marinus (strain MIT 9312).